A 31-amino-acid polypeptide reads, in one-letter code: Cytochrome b6-f complex subunit 6 (31 aa).

A helical membrane pass occupies residues 4–26 (ITSYFGFLLAALTVTSALFIGLS).

It belongs to the PetL family. As to quaternary structure, the 4 large subunits of the cytochrome b6-f complex are cytochrome b6, subunit IV (17 kDa polypeptide, PetD), cytochrome f and the Rieske protein, while the 4 small subunits are PetG, PetL, PetM and PetN. The complex functions as a dimer.

Its subcellular location is the plastid. It localises to the chloroplast thylakoid membrane. Component of the cytochrome b6-f complex, which mediates electron transfer between photosystem II (PSII) and photosystem I (PSI), cyclic electron flow around PSI, and state transitions. PetL is important for photoautotrophic growth as well as for electron transfer efficiency and stability of the cytochrome b6-f complex. This is Cytochrome b6-f complex subunit 6 from Daucus carota (Wild carrot).